A 722-amino-acid polypeptide reads, in one-letter code: Dipeptidyl aminopeptidase BII (722 aa).

Positions 1–24 (MRPNLLAAAIAVPLSLLAAQIAQA) are cleaved as a signal peptide. Cystine bridges form between Cys-70–Cys-87 and Cys-166–Cys-174. The active-site Charge relay system is His-86. A substrate-binding site is contributed by 215-216 (NW). The Charge relay system role is filled by Asp-224. Substrate-binding positions include Asn-330, 655–657 (GNS), and 673–674 (FD). The active-site Charge relay system is Ser-657.

The protein belongs to the peptidase S46 family. As to quaternary structure, homodimer.

With respect to regulation, completely inhibited by the serine protease inhibitor diisopropyl fluorophosphate (DFP) and potently inhibited by 0.5 mM ZnCl(2), 10 mM o-phenanthlorine, phenylmethanesulfonyl fluoride (PMSF) and N-tosyl-L-phenyl-alanyl chloromethyl ketone (TPCK), but not by N-tosyl-L-lysyl chloromethyl ketone (TLCK). Activity is not affected significantly by protease inhibitors, such as chymostatin, leupeptin, N-ethylmaleimide (NEM), iodoacetate (IAA), L-trans-epoxysuccinyl-leucylamido(4-guanido)butane (E64) and pepstatin A or by CoCl(2), CaCl(2) and EDTA. Its function is as follows. Exopeptidase that catalyzes the removal of dipeptide units (NH2-P2-P1-) from the free amino termini of oligopeptides and small proteins. Peptide digestion is sequential and substrate recognition is non-specific, with the exception that Pro is not suitable as a P1 residue. Removes many residues of bioactive oligopeptides such as angiotensin I and neuromedin N and also cleaves oxidized insulin B chain. Able to hydrolyze an X-Pro bond, an imido bond. No endopeptidase activity. May play a physiological role in feeding. The protein is Dipeptidyl aminopeptidase BII of Pseudoxanthomonas mexicana.